Here is a 243-residue protein sequence, read N- to C-terminus: Adenosylcobinamide-GDP ribazoletransferase (243 aa).

The next 5 helical transmembrane spans lie at 31–51 (LLFY…FNTL), 55–75 (APLM…SGGL), 109–129 (IAVV…LALI), 133–153 (ASVW…GLFL), and 188–208 (VLLA…CFFW).

Belongs to the CobS family. It depends on Mg(2+) as a cofactor.

It localises to the cell inner membrane. The catalysed reaction is alpha-ribazole + adenosylcob(III)inamide-GDP = adenosylcob(III)alamin + GMP + H(+). It catalyses the reaction alpha-ribazole 5'-phosphate + adenosylcob(III)inamide-GDP = adenosylcob(III)alamin 5'-phosphate + GMP + H(+). It participates in cofactor biosynthesis; adenosylcobalamin biosynthesis; adenosylcobalamin from cob(II)yrinate a,c-diamide: step 7/7. Joins adenosylcobinamide-GDP and alpha-ribazole to generate adenosylcobalamin (Ado-cobalamin). Also synthesizes adenosylcobalamin 5'-phosphate from adenosylcobinamide-GDP and alpha-ribazole 5'-phosphate. In Pseudomonas syringae pv. syringae (strain B728a), this protein is Adenosylcobinamide-GDP ribazoletransferase.